A 694-amino-acid chain; its full sequence is Elongation factor G (694 aa).

The tr-type G domain maps to 8 to 287; the sequence is EDYRNFGIMA…AVVEFLPAPT (280 aa). Residues 17 to 24, 86 to 90, and 140 to 143 each bind GTP; these read AHIDAGKT, DTPGH, and NKMD.

The protein belongs to the TRAFAC class translation factor GTPase superfamily. Classic translation factor GTPase family. EF-G/EF-2 subfamily.

The protein localises to the cytoplasm. Catalyzes the GTP-dependent ribosomal translocation step during translation elongation. During this step, the ribosome changes from the pre-translocational (PRE) to the post-translocational (POST) state as the newly formed A-site-bound peptidyl-tRNA and P-site-bound deacylated tRNA move to the P and E sites, respectively. Catalyzes the coordinated movement of the two tRNA molecules, the mRNA and conformational changes in the ribosome. In Brucella ovis (strain ATCC 25840 / 63/290 / NCTC 10512), this protein is Elongation factor G.